Here is a 652-residue protein sequence, read N- to C-terminus: Probable protein phosphatase 2C 19 (652 aa).

Residues 265–517 enclose the PPM-type phosphatase domain; it reads KYVVSSMQGW…DNTTVILVLF (253 aa). Mn(2+)-binding residues include aspartate 300, glycine 301, glutamate 467, and aspartate 508. The interval 524–567 is disordered; the sequence is AVPPVDTDTDTDSHTGDDVDNNDPANEVDPTANAGSDDSNTSDE.

This sequence belongs to the PP2C family. Mg(2+) is required as a cofactor. Mn(2+) serves as cofactor.

The enzyme catalyses O-phospho-L-seryl-[protein] + H2O = L-seryl-[protein] + phosphate. It carries out the reaction O-phospho-L-threonyl-[protein] + H2O = L-threonyl-[protein] + phosphate. This chain is Probable protein phosphatase 2C 19, found in Oryza sativa subsp. japonica (Rice).